The chain runs to 181 residues: Large ribosomal subunit protein uL6 (181 aa).

The protein belongs to the universal ribosomal protein uL6 family. Part of the 50S ribosomal subunit.

Functionally, this protein binds to the 23S rRNA, and is important in its secondary structure. It is located near the subunit interface in the base of the L7/L12 stalk, and near the tRNA binding site of the peptidyltransferase center. This Phytoplasma mali (strain AT) protein is Large ribosomal subunit protein uL6.